A 416-amino-acid polypeptide reads, in one-letter code: Gamma-glutamyl phosphate reductase (416 aa).

It belongs to the gamma-glutamyl phosphate reductase family.

It localises to the cytoplasm. It catalyses the reaction L-glutamate 5-semialdehyde + phosphate + NADP(+) = L-glutamyl 5-phosphate + NADPH + H(+). It participates in amino-acid biosynthesis; L-proline biosynthesis; L-glutamate 5-semialdehyde from L-glutamate: step 2/2. Functionally, catalyzes the NADPH-dependent reduction of L-glutamate 5-phosphate into L-glutamate 5-semialdehyde and phosphate. The product spontaneously undergoes cyclization to form 1-pyrroline-5-carboxylate. In Streptococcus pyogenes serotype M3 (strain ATCC BAA-595 / MGAS315), this protein is Gamma-glutamyl phosphate reductase.